Reading from the N-terminus, the 315-residue chain is Cyclin-dependent kinase B2-2 (315 aa).

Positions 16–306 (FEKLEKVGEG…AKKAMEHPYF (291 aa)) constitute a Protein kinase domain. ATP-binding positions include 22–30 (VGEGTYGKV) and lysine 45. Position 27 is a phosphotyrosine (tyrosine 27). Catalysis depends on aspartate 147, which acts as the Proton acceptor. Phosphothreonine is present on threonine 181.

Belongs to the protein kinase superfamily. CMGC Ser/Thr protein kinase family. CDC2/CDKX subfamily. Expressed in flowers.

It catalyses the reaction L-seryl-[protein] + ATP = O-phospho-L-seryl-[protein] + ADP + H(+). The enzyme catalyses L-threonyl-[protein] + ATP = O-phospho-L-threonyl-[protein] + ADP + H(+). It carries out the reaction [DNA-directed RNA polymerase] + ATP = phospho-[DNA-directed RNA polymerase] + ADP + H(+). The polypeptide is Cyclin-dependent kinase B2-2 (CDKB2-2) (Arabidopsis thaliana (Mouse-ear cress)).